We begin with the raw amino-acid sequence, 470 residues long: Cell division protein FtsA (470 aa).

A disordered region spans residues 416–470 (NKKDTHENEVESTDEEIYQSEDNHQEHKQNHEHVQDKDKDKEESKFKKLMKSLFE). Positions 425–434 (VESTDEEIYQ) are enriched in acidic residues. Residues 436-461 (EDNHQEHKQNHEHVQDKDKDKEESKF) show a composition bias toward basic and acidic residues.

Belongs to the FtsA/MreB family. As to quaternary structure, self-interacts. Interacts with FtsZ.

The protein localises to the cell membrane. Functionally, cell division protein that is involved in the assembly of the Z ring. May serve as a membrane anchor for the Z ring. The protein is Cell division protein FtsA of Staphylococcus aureus (strain NCTC 8325 / PS 47).